The following is a 468-amino-acid chain: Probable xyloglucan galactosyltransferase GT13 (468 aa).

Residues 1 to 18 are Cytoplasmic-facing; that stretch reads MDKFNPKKEKTVKKRALK. A helical; Signal-anchor for type II membrane protein membrane pass occupies residues 19–35; that stretch reads VLTEISPTPLFSMLFLL. The Lumenal segment spans residues 36-468; that stretch reads HISQIATYLS…RVSLFKMTRI (433 aa). N-linked (GlcNAc...) asparagine glycosylation is found at Asn53, Asn116, Asn153, Asn240, and Asn412.

The protein belongs to the glycosyltransferase 47 family. In terms of tissue distribution, expressed in roots, hypocotyls, cotyledons, leaves, stems, petals and carpels.

The protein localises to the golgi apparatus membrane. Functionally, functions in xyloglucan synthesis by adding side chains to the xylosylated glucan backbone. Involved in the galactosylation of hemicellulose xyloglucan. This Arabidopsis thaliana (Mouse-ear cress) protein is Probable xyloglucan galactosyltransferase GT13.